The sequence spans 165 residues: Inorganic pyrophosphatase (165 aa).

Residues K21, R35, and Y47 each coordinate substrate. Positions 57, 62, and 94 each coordinate Mg(2+). Y131 serves as a coordination point for substrate.

This sequence belongs to the PPase family. As to quaternary structure, homotrimer. In presence of divalent cations the trimers aggregate to form a hexamer. It depends on Mg(2+) as a cofactor.

It localises to the cytoplasm. The enzyme catalyses diphosphate + H2O = 2 phosphate + H(+). Catalyzes the hydrolysis of inorganic pyrophosphate (PPi) forming two phosphate ions. The sequence is that of Inorganic pyrophosphatase from Bacillus sp. (strain PS3).